Here is a 365-residue protein sequence, read N- to C-terminus: Dihydroorotate dehydrogenase (quinone) (365 aa).

Residues 61-65 (AGFDK) and serine 85 each bind FMN. Lysine 65 lines the substrate pocket. Substrate is bound at residue 110 to 114 (NRMGF). The FMN site is built by asparagine 139 and asparagine 170. Asparagine 170 contacts substrate. Serine 173 (nucleophile) is an active-site residue. Asparagine 175 provides a ligand contact to substrate. The FMN site is built by lysine 214 and serine 242. 243–244 (NT) is a binding site for substrate. FMN is bound by residues glycine 266, glycine 295, and 316-317 (YS).

It belongs to the dihydroorotate dehydrogenase family. Type 2 subfamily. In terms of assembly, monomer. It depends on FMN as a cofactor.

It localises to the cell membrane. It catalyses the reaction (S)-dihydroorotate + a quinone = orotate + a quinol. It functions in the pathway pyrimidine metabolism; UMP biosynthesis via de novo pathway; orotate from (S)-dihydroorotate (quinone route): step 1/1. Catalyzes the conversion of dihydroorotate to orotate with quinone as electron acceptor. The sequence is that of Dihydroorotate dehydrogenase (quinone) from Bradyrhizobium diazoefficiens (strain JCM 10833 / BCRC 13528 / IAM 13628 / NBRC 14792 / USDA 110).